The primary structure comprises 373 residues: COP9 signalosome complex subunit 5 (373 aa).

The region spanning 66–201 (CLISRLATTK…IGAFRTLPSK (136 aa)) is the MPN domain. The Zn(2+) site is built by His147, His149, and Asp160. The short motif at 147 to 160 (HSHPGYGCWLSNID) is the JAMM motif element. A disordered region spans residues 289 to 325 (FTHERSNSISSTSSLTTRHTTDVEMDDQESAQSSLDI). Residues 295–306 (NSISSTSSLTTR) show a composition bias toward low complexity.

It belongs to the peptidase M67A family. CSN5 subfamily. Component of the COP9 signalosome (CSN) complex.

The protein resides in the cytoplasm. It is found in the nucleus. Catalytic Component of the COP9 signalosome (CSN) complex that acts as an regulator of the ubiquitin (Ubl) conjugation pathway by mediating the deneddylation of the cullin subunit of SCF-type E3 ubiquitin-protein ligase complexes. The CNS complex is involved in the regulation of the mating pheromone response. The protein is COP9 signalosome complex subunit 5 (RRI1) of Kluyveromyces lactis (strain ATCC 8585 / CBS 2359 / DSM 70799 / NBRC 1267 / NRRL Y-1140 / WM37) (Yeast).